The chain runs to 249 residues: LexA repressor (249 aa).

Residues 1–26 (MAAQATGGRATQRSQQSPAKPKGLTV) form a disordered region. Polar residues predominate over residues 9 to 18 (RATQRSQQSP). The segment at residues 48–68 (MREIGDTVGLASLSSVTHQLS) is a DNA-binding region (H-T-H motif). Residues Ser173 and Lys210 each act as for autocatalytic cleavage activity in the active site.

The protein belongs to the peptidase S24 family. In terms of assembly, homodimer.

It carries out the reaction Hydrolysis of Ala-|-Gly bond in repressor LexA.. Functionally, represses a number of genes involved in the response to DNA damage (SOS response), including recA and lexA. In the presence of single-stranded DNA, RecA interacts with LexA causing an autocatalytic cleavage which disrupts the DNA-binding part of LexA, leading to derepression of the SOS regulon and eventually DNA repair. This is LexA repressor from Arthrobacter sp. (strain FB24).